Here is a 285-residue protein sequence, read N- to C-terminus: Sulfotransferase 2A1 (285 aa).

Residues Lys44, Ser45, Gly46, Thr47, Asn48, and Trp49 each coordinate 3'-phosphoadenylyl sulfate. The active-site Proton acceptor is the His99. 8 residues coordinate 3'-phosphoadenylyl sulfate: Arg121, Ser129, Tyr184, Ser218, Met223, Arg247, Lys248, and Gly249. Position 251 is a phosphoserine (Ser251).

This sequence belongs to the sulfotransferase 1 family. In terms of assembly, homodimer. In terms of processing, the N-terminus is blocked. As to expression, liver, adrenal and at lower level in the kidney. Is present in human fetus in higher level in the adrenal than the liver and the kidney.

Its subcellular location is the cytoplasm. It carries out the reaction an alcohol + 3'-phosphoadenylyl sulfate = an alkyl sulfate + adenosine 3',5'-bisphosphate + H(+). The catalysed reaction is (24S)-hydroxycholesterol + 3'-phosphoadenylyl sulfate = (24S)-hydroxycholesterol 24-sulfate + adenosine 3',5'-bisphosphate + H(+). The enzyme catalyses (24S)-hydroxycholesterol + 3'-phosphoadenylyl sulfate = (24S)-hydroxycholesterol 3-sulfate + adenosine 3',5'-bisphosphate + H(+). It catalyses the reaction (24S)-hydroxycholesterol 24-sulfate + 3'-phosphoadenylyl sulfate = (24S)-hydroxycholesterol 3,24-disulfate + adenosine 3',5'-bisphosphate + H(+). It carries out the reaction 3beta-hydroxyandrost-5-en-17-one + 3'-phosphoadenylyl sulfate = dehydroepiandrosterone 3-sulfate + adenosine 3',5'-bisphosphate + H(+). The catalysed reaction is pregnenolone + 3'-phosphoadenylyl sulfate = pregnenolone sulfate + adenosine 3',5'-bisphosphate + H(+). The enzyme catalyses androsterone + 3'-phosphoadenylyl sulfate = androsterone 3alpha-sulfate + adenosine 3',5'-bisphosphate + H(+). It catalyses the reaction taurolithocholate + 3'-phosphoadenylyl sulfate = taurolithocholate 3-sulfate + adenosine 3',5'-bisphosphate + H(+). It carries out the reaction lithocholate + 3'-phosphoadenylyl sulfate = lithocholate sulfate + adenosine 3',5'-bisphosphate + H(+). Its activity is regulated as follows. Subject to substrate inhibition. Alternate orientations for binding of steroid substrates to SULT2A1 may play a role in substrate inhibition. Sulfotransferase that utilizes 3'-phospho-5'-adenylyl sulfate (PAPS) as sulfonate donor to catalyze the sulfonation of steroids and bile acids in the liver and adrenal glands. Mediates the sulfation of a wide range of steroids and sterols, including pregnenolone, androsterone, DHEA, bile acids, cholesterol and as well many xenobiotics that contain alcohol and phenol functional groups. Sulfonation increases the water solubility of most compounds, and therefore their renal excretion, but it can also result in bioactivation to form active metabolites. Plays an important role in maintening steroid and lipid homeostasis. Plays a key role in bile acid metabolism. In addition, catalyzes the metabolic activation of potent carcinogenic polycyclic arylmethanols. This Homo sapiens (Human) protein is Sulfotransferase 2A1 (SULT2A1).